Reading from the N-terminus, the 1252-residue chain is DNA-directed RNA polymerase subunit beta (1252 aa).

The protein belongs to the RNA polymerase beta chain family. The RNAP catalytic core consists of 2 alpha, 1 beta, 1 beta' and 1 omega subunit. When a sigma factor is associated with the core the holoenzyme is formed, which can initiate transcription.

It carries out the reaction RNA(n) + a ribonucleoside 5'-triphosphate = RNA(n+1) + diphosphate. In terms of biological role, DNA-dependent RNA polymerase catalyzes the transcription of DNA into RNA using the four ribonucleoside triphosphates as substrates. This is DNA-directed RNA polymerase subunit beta from Chlamydia trachomatis serovar L2 (strain ATCC VR-902B / DSM 19102 / 434/Bu).